The primary structure comprises 1387 residues: DNA-directed RNA polymerase subunit beta'' (1387 aa).

Zn(2+)-binding residues include cysteine 220, cysteine 291, cysteine 298, and cysteine 301.

Belongs to the RNA polymerase beta' chain family. RpoC2 subfamily. In terms of assembly, in plastids the minimal PEP RNA polymerase catalytic core is composed of four subunits: alpha, beta, beta', and beta''. When a (nuclear-encoded) sigma factor is associated with the core the holoenzyme is formed, which can initiate transcription. The cofactor is Zn(2+).

It is found in the plastid. It localises to the chloroplast. The catalysed reaction is RNA(n) + a ribonucleoside 5'-triphosphate = RNA(n+1) + diphosphate. Functionally, DNA-dependent RNA polymerase catalyzes the transcription of DNA into RNA using the four ribonucleoside triphosphates as substrates. The polypeptide is DNA-directed RNA polymerase subunit beta'' (Carica papaya (Papaya)).